The following is a 513-amino-acid chain: ATP synthase subunit alpha (513 aa).

169-176 is a binding site for ATP; the sequence is GDRQTGKT.

It belongs to the ATPase alpha/beta chains family. In terms of assembly, F-type ATPases have 2 components, CF(1) - the catalytic core - and CF(0) - the membrane proton channel. CF(1) has five subunits: alpha(3), beta(3), gamma(1), delta(1), epsilon(1). CF(0) has three main subunits: a(1), b(2) and c(9-12). The alpha and beta chains form an alternating ring which encloses part of the gamma chain. CF(1) is attached to CF(0) by a central stalk formed by the gamma and epsilon chains, while a peripheral stalk is formed by the delta and b chains.

The protein resides in the cell inner membrane. The enzyme catalyses ATP + H2O + 4 H(+)(in) = ADP + phosphate + 5 H(+)(out). Its function is as follows. Produces ATP from ADP in the presence of a proton gradient across the membrane. The alpha chain is a regulatory subunit. The chain is ATP synthase subunit alpha from Yersinia enterocolitica serotype O:8 / biotype 1B (strain NCTC 13174 / 8081).